The chain runs to 142 residues: Aspartate 1-decarboxylase (142 aa).

Catalysis depends on Ser-25, which acts as the Schiff-base intermediate with substrate; via pyruvic acid. Ser-25 bears the Pyruvic acid (Ser) mark. Thr-57 lines the substrate pocket. Catalysis depends on Tyr-58, which acts as the Proton donor. Position 73-75 (73-75 (GAA)) interacts with substrate.

This sequence belongs to the PanD family. In terms of assembly, heterooctamer of four alpha and four beta subunits. It depends on pyruvate as a cofactor. In terms of processing, is synthesized initially as an inactive proenzyme, which is activated by self-cleavage at a specific serine bond to produce a beta-subunit with a hydroxyl group at its C-terminus and an alpha-subunit with a pyruvoyl group at its N-terminus.

It localises to the cytoplasm. The enzyme catalyses L-aspartate + H(+) = beta-alanine + CO2. The protein operates within cofactor biosynthesis; (R)-pantothenate biosynthesis; beta-alanine from L-aspartate: step 1/1. Catalyzes the pyruvoyl-dependent decarboxylation of aspartate to produce beta-alanine. In Arthrobacter sp. (strain FB24), this protein is Aspartate 1-decarboxylase.